A 707-amino-acid polypeptide reads, in one-letter code: Ribosomal RNA large subunit methyltransferase K/L (707 aa).

A THUMP domain is found at Val-44–Leu-155.

The protein belongs to the methyltransferase superfamily. RlmKL family.

The protein localises to the cytoplasm. It catalyses the reaction guanosine(2445) in 23S rRNA + S-adenosyl-L-methionine = N(2)-methylguanosine(2445) in 23S rRNA + S-adenosyl-L-homocysteine + H(+). The enzyme catalyses guanosine(2069) in 23S rRNA + S-adenosyl-L-methionine = N(2)-methylguanosine(2069) in 23S rRNA + S-adenosyl-L-homocysteine + H(+). Specifically methylates the guanine in position 2445 (m2G2445) and the guanine in position 2069 (m7G2069) of 23S rRNA. In Legionella pneumophila (strain Paris), this protein is Ribosomal RNA large subunit methyltransferase K/L.